The primary structure comprises 185 residues: GTP cyclohydrolase 1 (185 aa).

Zn(2+) contacts are provided by Cys76, His79, and Cys147.

It belongs to the GTP cyclohydrolase I family. Toroid-shaped homodecamer, composed of two pentamers of five dimers.

It catalyses the reaction GTP + H2O = 7,8-dihydroneopterin 3'-triphosphate + formate + H(+). It participates in cofactor biosynthesis; 7,8-dihydroneopterin triphosphate biosynthesis; 7,8-dihydroneopterin triphosphate from GTP: step 1/1. This chain is GTP cyclohydrolase 1, found in Clostridium perfringens (strain 13 / Type A).